Consider the following 699-residue polypeptide: Elongation factor G (699 aa).

The 281-residue stretch at 8–288 folds into the tr-type G domain; it reads EDYRNFGIMA…AVVDYLPSPI (281 aa). Residues 17 to 24, 86 to 90, and 140 to 143 each bind GTP; these read AHIDAGKT, DTPGH, and NKMD.

Belongs to the TRAFAC class translation factor GTPase superfamily. Classic translation factor GTPase family. EF-G/EF-2 subfamily.

The protein resides in the cytoplasm. In terms of biological role, catalyzes the GTP-dependent ribosomal translocation step during translation elongation. During this step, the ribosome changes from the pre-translocational (PRE) to the post-translocational (POST) state as the newly formed A-site-bound peptidyl-tRNA and P-site-bound deacylated tRNA move to the P and E sites, respectively. Catalyzes the coordinated movement of the two tRNA molecules, the mRNA and conformational changes in the ribosome. The chain is Elongation factor G from Rhizobium meliloti (strain 1021) (Ensifer meliloti).